Reading from the N-terminus, the 232-residue chain is MRLVVAQCTVNYVGRLTAHLPSAKRLLLIKADGSVSVHADDRAYKPLNWMSPPCWLTETEGEGGDDTSESGAPTVWVVENKAGEQLRITIESIEHDSAHELGVDPGLVKDGVEAHLQELLAEHVALLGDGYTLVRREYMTPIGPVDLLCRDADGATVAVEIKRRGEIDGVEQLTRYLELLNRDTTLAPVAGVFAAQQIKPQARTLAEDRGIRCLTLDYDAMRGMDSDEFRLF.

The protein belongs to the NucS endonuclease family.

The protein resides in the cytoplasm. Cleaves both 3' and 5' ssDNA extremities of branched DNA structures. The sequence is that of Endonuclease NucS from Mycobacteroides abscessus (strain ATCC 19977 / DSM 44196 / CCUG 20993 / CIP 104536 / JCM 13569 / NCTC 13031 / TMC 1543 / L948) (Mycobacterium abscessus).